A 133-amino-acid polypeptide reads, in one-letter code: Small ribosomal subunit protein uS8 (133 aa).

The protein belongs to the universal ribosomal protein uS8 family. In terms of assembly, part of the 30S ribosomal subunit. Contacts proteins S5 and S12.

Functionally, one of the primary rRNA binding proteins, it binds directly to 16S rRNA central domain where it helps coordinate assembly of the platform of the 30S subunit. The protein is Small ribosomal subunit protein uS8 of Synechocystis sp. (strain ATCC 27184 / PCC 6803 / Kazusa).